Consider the following 330-residue polypeptide: Peroxisomal membrane protein PEX13 (330 aa).

The segment covering 1 to 14 (MSAPPTNQPPPLPP) has biased composition (pro residues). The interval 1 to 20 (MSAPPTNQPPPLPPRSFDNQ) is disordered. A helical transmembrane segment spans residues 193–213 (ASVNWPAALFWVVAIGGPWLI). In terms of domain architecture, SH3 spans 235–300 (APHYTAQALF…PINYVRIVGK (66 aa)).

It belongs to the peroxin-13 family. Interacts with PEX14/prx-14; forming the PEX13-PEX14 docking complex.

It localises to the peroxisome membrane. Its function is as follows. Component of the PEX13-PEX14 docking complex, a translocon channel that specifically mediates the import of peroxisomal cargo proteins bound to PEX5/prx-5 receptor. The PEX13-PEX14 docking complex forms a large import pore which can be opened to a diameter of about 9 nm. Mechanistically, PEX5/prx-5 receptor along with cargo proteins associates with the PEX14/prx-14 subunit of the PEX13-PEX14 docking complex in the cytosol, leading to the insertion of the receptor into the organelle membrane with the concomitant translocation of the cargo into the peroxisome matrix. This chain is Peroxisomal membrane protein PEX13 (prx-13), found in Caenorhabditis elegans.